The primary structure comprises 874 residues: MNRWARWPLIILIGILGISAVVILSSLASVDYLINIWWFDSLGYGLYYWLRLLYRYIVFGAVTLLFFLIFFLNFWVASRYVGNVPPAPSKFRIAALDRYLNVVRMFRSGSLWVYTPLSLILAVIIALPIFEKWEAFLLYVAGPKTGVPDPVYGKDISYYLFSYPIYTLVQRRLLIAFVLLLVGLVALYLLERRLLARQEQPIPAGARLHLSILILLIFLIETWDYVLQRYELLYSEAHMPLFYGGGFVEMYVIWALIWLTLFFLMGTAFSMIAFIQTRKGLKPLVVFAVGFVLVLGLRYSAFLPATVEKLVVKPNEVSRERDFIVNNIKATLSAYNLNTVQTRDFTPARTAADVASPKVKAQLRNIPVWDGELLDDVYKQLQQLRTYYTFPSVDVARYTVNGMPQQVFLSVRELDYTLIPEAARNWVNEHLSYTHGYGAVMTPASQGGDEPMTWFIKGIPPESEYGFRIEQPGVYIGLGSYTYVIAPNDAGEIDYPKGNSNTMVSYKAEDGVPLSSFLRRILFAYHFGDRNLLFTTKTTPDSKILFRRNLLERIRVLTPFLLLDGDPYAVVTPGKLYWIQDAYTTSEFYPGATPTLWGRDRFNYIRNSVKIVVDAFSGKVEYYVFEPGDPIVRAYSRIYPGVFRNADQMPPELKAQVRYPQDIFEIQMNIYAKYQQTDPEVYYQQEDMWEPAKTFQDRTPVTIKPYYVTLDLIDPSRFDFLLLAPMSPKGRDNLRALALAGSDPPHYGKIIVYNFPKGELIYGPSQIYALINQDTRISEQFTLWDQVGSQVARGKMIILPISNMILYIQPVYLKSATKLKIPELKRIIMSQGQIVVMEPSLEEAYAKLQERIKLEIDRVDKRFAPLLPGSPAGR.

Helical transmembrane passes span 7-27 (WPLIILIGILGISAVVILSSL), 57-77 (IVFGAVTLLFFLIFFLNFWVA), 110-130 (SLWVYTPLSLILAVIIALPIF), 171-191 (RRLLIAFVLLLVGLVALYLLE), 208-228 (LHLSILILLIFLIETWDYVLQ), 252-272 (VIWALIWLTLFFLMGTAFSMI), and 283-303 (PLVVFAVGFVLVLGLRYSAFL).

The protein belongs to the UPF0182 family.

It localises to the cell membrane. The sequence is that of UPF0182 protein Sfum_2137 from Syntrophobacter fumaroxidans (strain DSM 10017 / MPOB).